Consider the following 944-residue polypeptide: Translation initiation factor IF-2 (944 aa).

Disordered stretches follow at residues 61 to 157 (IQAN…KAKQ) and 173 to 281 (TQSN…SHKI). Positions 132–150 (TFENQTPPTENTPKVVSHS) are enriched in polar residues. A compositionally biased stretch (low complexity) spans 175-185 (SNANNASNANN). Over residues 186–203 (AKKEISEVKKQEQEIKRH) the composition is skewed to basic and acidic residues. Positions 204–215 (ENIKRRTGFRVI) are enriched in basic residues. Positions 244 to 259 (EDIKKEWQEKDKQEAK) are enriched in basic and acidic residues. The tr-type G domain occupies 443 to 612 (ERPPVVTIMG…LIQAGIMELK (170 aa)). The tract at residues 452-459 (GHVDHGKT) is G1. 452–459 (GHVDHGKT) lines the GTP pocket. The segment at 477–481 (GITQH) is G2. The interval 498-501 (DTPG) is G3. GTP-binding positions include 498-502 (DTPGH) and 552-555 (NKMD). Positions 552–555 (NKMD) are G4. The segment at 588–590 (SAK) is G5.

It belongs to the TRAFAC class translation factor GTPase superfamily. Classic translation factor GTPase family. IF-2 subfamily.

It localises to the cytoplasm. In terms of biological role, one of the essential components for the initiation of protein synthesis. Protects formylmethionyl-tRNA from spontaneous hydrolysis and promotes its binding to the 30S ribosomal subunits. Also involved in the hydrolysis of GTP during the formation of the 70S ribosomal complex. The sequence is that of Translation initiation factor IF-2 (infB) from Helicobacter pylori (strain ATCC 700392 / 26695) (Campylobacter pylori).